The sequence spans 159 residues: NADH-quinone oxidoreductase subunit B (159 aa).

[4Fe-4S] cluster is bound by residues cysteine 37, cysteine 38, cysteine 102, and cysteine 132.

Belongs to the complex I 20 kDa subunit family. As to quaternary structure, NDH-1 is composed of 14 different subunits. Subunits NuoB, C, D, E, F, and G constitute the peripheral sector of the complex. [4Fe-4S] cluster serves as cofactor.

It is found in the cell inner membrane. It catalyses the reaction a quinone + NADH + 5 H(+)(in) = a quinol + NAD(+) + 4 H(+)(out). Its function is as follows. NDH-1 shuttles electrons from NADH, via FMN and iron-sulfur (Fe-S) centers, to quinones in the respiratory chain. The immediate electron acceptor for the enzyme in this species is believed to be ubiquinone. Couples the redox reaction to proton translocation (for every two electrons transferred, four hydrogen ions are translocated across the cytoplasmic membrane), and thus conserves the redox energy in a proton gradient. The sequence is that of NADH-quinone oxidoreductase subunit B from Variovorax paradoxus (strain S110).